The chain runs to 240 residues: Large ribosomal subunit protein bL25 (240 aa).

2 disordered regions span residues 1-20 and 220-240; these read MAEN…GPAR and PAAG…KGKK. Residues 220–229 are compositionally biased toward low complexity; the sequence is PAAGAAPAKG. Residues 230-240 show a composition bias toward basic and acidic residues; sequence GEAKGGDKGKK.

Belongs to the bacterial ribosomal protein bL25 family. CTC subfamily. As to quaternary structure, part of the 50S ribosomal subunit; part of the 5S rRNA/L5/L18/L25 subcomplex. Contacts the 5S rRNA. Binds to the 5S rRNA independently of L5 and L18.

Its function is as follows. This is one of the proteins that binds to the 5S RNA in the ribosome where it forms part of the central protuberance. This chain is Large ribosomal subunit protein bL25, found in Anaeromyxobacter dehalogenans (strain 2CP-C).